A 160-amino-acid chain; its full sequence is 6,7-dimethyl-8-ribityllumazine synthase (160 aa).

Residues tryptophan 28, 59-61 (ALE), and 81-83 (CVI) each bind 5-amino-6-(D-ribitylamino)uracil. (2S)-2-hydroxy-3-oxobutyl phosphate is bound at residue 86–87 (ET). Histidine 89 (proton donor) is an active-site residue. Residue asparagine 114 participates in 5-amino-6-(D-ribitylamino)uracil binding. Arginine 128 contacts (2S)-2-hydroxy-3-oxobutyl phosphate.

The protein belongs to the DMRL synthase family.

It carries out the reaction (2S)-2-hydroxy-3-oxobutyl phosphate + 5-amino-6-(D-ribitylamino)uracil = 6,7-dimethyl-8-(1-D-ribityl)lumazine + phosphate + 2 H2O + H(+). It participates in cofactor biosynthesis; riboflavin biosynthesis; riboflavin from 2-hydroxy-3-oxobutyl phosphate and 5-amino-6-(D-ribitylamino)uracil: step 1/2. Functionally, catalyzes the formation of 6,7-dimethyl-8-ribityllumazine by condensation of 5-amino-6-(D-ribitylamino)uracil with 3,4-dihydroxy-2-butanone 4-phosphate. This is the penultimate step in the biosynthesis of riboflavin. This chain is 6,7-dimethyl-8-ribityllumazine synthase, found in Corynebacterium jeikeium (strain K411).